The chain runs to 470 residues: Uronate isomerase (470 aa).

The protein belongs to the metallo-dependent hydrolases superfamily. Uronate isomerase family.

The enzyme catalyses D-glucuronate = D-fructuronate. It catalyses the reaction aldehydo-D-galacturonate = keto-D-tagaturonate. Its pathway is carbohydrate metabolism; pentose and glucuronate interconversion. The polypeptide is Uronate isomerase (Salmonella typhi).